A 246-amino-acid chain; its full sequence is 1-(5-phosphoribosyl)-5-[(5-phosphoribosylamino)methylideneamino] imidazole-4-carboxamide isomerase (246 aa).

Aspartate 8 serves as the catalytic Proton acceptor. Residue aspartate 131 is the Proton donor of the active site.

It belongs to the HisA/HisF family.

It localises to the cytoplasm. The enzyme catalyses 1-(5-phospho-beta-D-ribosyl)-5-[(5-phospho-beta-D-ribosylamino)methylideneamino]imidazole-4-carboxamide = 5-[(5-phospho-1-deoxy-D-ribulos-1-ylimino)methylamino]-1-(5-phospho-beta-D-ribosyl)imidazole-4-carboxamide. Its pathway is amino-acid biosynthesis; L-histidine biosynthesis; L-histidine from 5-phospho-alpha-D-ribose 1-diphosphate: step 4/9. The chain is 1-(5-phosphoribosyl)-5-[(5-phosphoribosylamino)methylideneamino] imidazole-4-carboxamide isomerase from Bordetella bronchiseptica (strain ATCC BAA-588 / NCTC 13252 / RB50) (Alcaligenes bronchisepticus).